We begin with the raw amino-acid sequence, 428 residues long: Glutamyl-tRNA reductase (428 aa).

Residues threonine 49–arginine 52, serine 109, glutamate 114–glutamine 116, and glutamine 120 contribute to the substrate site. Cysteine 50 serves as the catalytic Nucleophile. Glycine 189–serine 194 provides a ligand contact to NADP(+).

It belongs to the glutamyl-tRNA reductase family. As to quaternary structure, homodimer.

It catalyses the reaction (S)-4-amino-5-oxopentanoate + tRNA(Glu) + NADP(+) = L-glutamyl-tRNA(Glu) + NADPH + H(+). It participates in porphyrin-containing compound metabolism; protoporphyrin-IX biosynthesis; 5-aminolevulinate from L-glutamyl-tRNA(Glu): step 1/2. The protein operates within porphyrin-containing compound metabolism; chlorophyll biosynthesis. In terms of biological role, catalyzes the NADPH-dependent reduction of glutamyl-tRNA(Glu) to glutamate 1-semialdehyde (GSA). This is Glutamyl-tRNA reductase from Gloeothece citriformis (strain PCC 7424) (Cyanothece sp. (strain PCC 7424)).